The following is a 132-amino-acid chain: Phosphoribosyl-AMP cyclohydrolase (132 aa).

Aspartate 86 is a Mg(2+) binding site. Cysteine 87 is a Zn(2+) binding site. The Mg(2+) site is built by aspartate 88 and aspartate 90. Residues cysteine 103 and cysteine 110 each coordinate Zn(2+).

It belongs to the PRA-CH family. As to quaternary structure, homodimer. It depends on Mg(2+) as a cofactor. Zn(2+) serves as cofactor.

The protein localises to the cytoplasm. It carries out the reaction 1-(5-phospho-beta-D-ribosyl)-5'-AMP + H2O = 1-(5-phospho-beta-D-ribosyl)-5-[(5-phospho-beta-D-ribosylamino)methylideneamino]imidazole-4-carboxamide. It functions in the pathway amino-acid biosynthesis; L-histidine biosynthesis; L-histidine from 5-phospho-alpha-D-ribose 1-diphosphate: step 3/9. Catalyzes the hydrolysis of the adenine ring of phosphoribosyl-AMP. This Clavibacter michiganensis subsp. michiganensis (strain NCPPB 382) protein is Phosphoribosyl-AMP cyclohydrolase.